Consider the following 152-residue polypeptide: Superoxide dismutase [Cu-Zn] 2 (152 aa).

Residues His45, His47, and His62 each contribute to the Cu cation site. An intrachain disulfide couples Cys56 to Cys145. Positions 62, 70, 79, and 82 each coordinate Zn(2+). His119 contacts Cu cation.

Belongs to the Cu-Zn superoxide dismutase family. As to quaternary structure, homodimer. Requires Cu cation as cofactor. Zn(2+) serves as cofactor.

Its subcellular location is the cytoplasm. The catalysed reaction is 2 superoxide + 2 H(+) = H2O2 + O2. Functionally, destroys radicals which are normally produced within the cells and which are toxic to biological systems. The protein is Superoxide dismutase [Cu-Zn] 2 (SODCC.5) of Solanum lycopersicum (Tomato).